Consider the following 416-residue polypeptide: S-layer protein B (416 aa).

The N-terminal stretch at 1 to 20 (MKYNLLPLILLSLLVAPLLA) is a signal peptide. A coiled-coil region spans residues 310 to 330 (IASLNSTIQSLESQISSLSST). A helical membrane pass occupies residues 392–412 (IALAVSIIAIIISIVVLILVF).

The protein belongs to the Sulfolobales SlaB family. As to quaternary structure, the mushroom-shaped unit cells of the Sulfolobales' S-layers may consist of three SlaB subunits and six SlaA subunits.

It localises to the secreted. It is found in the cell wall. Its subcellular location is the S-layer. The protein localises to the cell membrane. S-layer small protein. May anchor the complex to the cell membrane. This chain is S-layer protein B, found in Metallosphaera sedula (strain ATCC 51363 / DSM 5348 / JCM 9185 / NBRC 15509 / TH2).